The chain runs to 334 residues: Galactinol synthase 4 (334 aa).

Lys104 is an active-site residue. 3 residues coordinate Mn(2+): Asp120, Asp122, and His258.

The protein belongs to the glycosyltransferase 8 family. Galactosyltransferase subfamily. Requires a divalent metal cation as cofactor.

The protein resides in the cytoplasm. The enzyme catalyses myo-inositol + UDP-alpha-D-galactose = alpha-D-galactosyl-(1-&gt;3)-1D-myo-inositol + UDP + H(+). Its function is as follows. Galactinol synthase involved in the biosynthesis of raffinose family oligosaccharides (RFOs) that function as osmoprotectants. May promote plant stress tolerance. The protein is Galactinol synthase 4 (GOLS4) of Arabidopsis thaliana (Mouse-ear cress).